The following is a 191-amino-acid chain: Tellurium resistance protein TerE (191 aa).

It belongs to the CAPAB/TerDEXZ family.

Its function is as follows. Not known; seems to contribute to the tellurium resistance (Ter) mechanism. Also involved in phage inhibition (Phi) and colicin resistance (PacB). This Serratia marcescens protein is Tellurium resistance protein TerE (terE).